Consider the following 211-residue polypeptide: Uracil phosphoribosyltransferase (211 aa).

5-phospho-alpha-D-ribose 1-diphosphate contacts are provided by residues Arg78, Arg103, and 130-138; that span reads DPMLATGGS. Uracil is bound by residues Ile193 and 198-200; that span reads GDA. 5-phospho-alpha-D-ribose 1-diphosphate is bound at residue Asp199.

This sequence belongs to the UPRTase family. The cofactor is Mg(2+).

It catalyses the reaction UMP + diphosphate = 5-phospho-alpha-D-ribose 1-diphosphate + uracil. It participates in pyrimidine metabolism; UMP biosynthesis via salvage pathway; UMP from uracil: step 1/1. With respect to regulation, allosterically activated by GTP. In terms of biological role, catalyzes the conversion of uracil and 5-phospho-alpha-D-ribose 1-diphosphate (PRPP) to UMP and diphosphate. The protein is Uracil phosphoribosyltransferase of Hahella chejuensis (strain KCTC 2396).